We begin with the raw amino-acid sequence, 87 residues long: U3-theraphotoxin-Hhn1d (87 aa).

An N-terminal signal peptide occupies residues 1-24 (MVNMKASMFLTFAGLVLLFVVCYA). A propeptide spanning residues 25–52 (SESEEKEFPKEMLSSIFAVDNDFKQEER) is cleaved from the precursor. 3 cysteine pairs are disulfide-bonded: cysteine 54–cysteine 67, cysteine 61–cysteine 72, and cysteine 66–cysteine 79.

This sequence belongs to the neurotoxin 10 (Hwtx-1) family. 51 (Hntx-8) subfamily. Hntx-8 sub-subfamily. As to expression, expressed by the venom gland.

The protein resides in the secreted. In terms of biological role, ion channel inhibitor. This is U3-theraphotoxin-Hhn1d from Cyriopagopus hainanus (Chinese bird spider).